Consider the following 95-residue polypeptide: Neurexophilin-3 (95 aa).

2 N-linked (GlcNAc...) asparagine glycosylation sites follow: asparagine 1 and asparagine 7. The interval 1–21 is III; sequence NATGQGNISISLVPPSKAVEX. Residues 22-30 are IV (linker domain); it reads HQXQQIFIE. Positions 31–95 are v (Cys-rich); that stretch reads AKASKIFNCR…YIAFYSTDYR (65 aa).

It belongs to the neurexophilin family.

It is found in the secreted. Functionally, may be signaling molecules that resemble neuropeptides. Ligand for alpha-neurexins. The protein is Neurexophilin-3 (NXPH3) of Macaca mulatta (Rhesus macaque).